A 410-amino-acid polypeptide reads, in one-letter code: Transcription factor rglT (410 aa).

Residues 1 to 24 (MQFDSLPLPPSSSHDTTSVPPLKR) are disordered. The zn(2)-C6 fungal-type DNA-binding region spans 28–55 (CDECRKRKLKCSGEATGCSRCLKQSLPC). Residues 353-372 (HRTRTVESPNEPGSCSPVSH) are disordered. Residues 358-369 (VESPNEPGSCSP) are compositionally biased toward polar residues.

The protein localises to the nucleus. Functionally, transcription factor that is involved in protection against oxidative stress. Binds to promoter regions of the gliotoxin (GT) biosynthetic genes gliZ, gliF, gliT, gliM, gliA and gtmA. Two related but different DNA motifs (5'-TCGG-3' and 5'-CGGNCGG-3') are specifically enriched among rglT binding sites in GT-inducing conditions. Also indirectly regulates the expression of gliP, gliG, gliH and gliN. Plays a key role in resistance against exogenously-added GT and GT biosynthesis, mainly through the direct regulation of gliT. Furthermore, rglT is important for virulence in chemotherapeutic mice with invasive pulmonary aspergillosis (IPA). In Aspergillus fumigatus (strain CBS 144.89 / FGSC A1163 / CEA10) (Neosartorya fumigata), this protein is Transcription factor rglT.